Here is a 37-residue protein sequence, read N- to C-terminus: Esculentin-2L (37 aa).

A disulfide bridge connects residues cysteine 31 and cysteine 37.

As to expression, expressed by the skin glands.

It localises to the secreted. Its function is as follows. Antibacterial activity against Gram-positive bacterium S.aureus and Gram-negative bacterium E.coli. Has activity against C.albicans. In Rana luteiventris (Columbia spotted frog), this protein is Esculentin-2L.